We begin with the raw amino-acid sequence, 300 residues long: Cation-efflux pump FieF (300 aa).

4 consecutive transmembrane segments (helical) span residues 12–32, 39–59, 82–102, and 114–134; these read AAIAATVMASLLLLIKIFAWW, ILAALVDSLVDIAASLTNLLV, AALAQSMFISGSALFLFLTGI, and PGVGIVVTLIALVCTIILVTF. 2 residues coordinate Zn(2+): D45 and D49. Positions 153 and 157 each coordinate Zn(2+). A helical membrane pass occupies residues 164–184; sequence ILVALGLAWYGWHRADALFAL.

Belongs to the cation diffusion facilitator (CDF) transporter (TC 2.A.4) family. FieF subfamily. Homodimer.

The protein resides in the cell inner membrane. It carries out the reaction Zn(2+)(in) + H(+)(out) = Zn(2+)(out) + H(+)(in). The catalysed reaction is Cd(2+)(in) + H(+)(out) = Cd(2+)(out) + H(+)(in). It catalyses the reaction Fe(2+)(in) + H(+)(out) = Fe(2+)(out) + H(+)(in). Its function is as follows. Divalent metal cation transporter which exports Zn(2+), Cd(2+) and possibly Fe(2+). May be involved in zinc and iron detoxification by efflux. The protein is Cation-efflux pump FieF of Citrobacter koseri (strain ATCC BAA-895 / CDC 4225-83 / SGSC4696).